The primary structure comprises 446 residues: Neuropeptide Y receptor type 5 (446 aa).

At 1 to 42 (MDLELQDFYNKTLATENNTAATRNSDFPVWDDYKSSVDDLQY) the chain is on the extracellular side. Residues Asn-10 and Asn-17 are each glycosylated (N-linked (GlcNAc...) asparagine). Residues 43–63 (FLIGLYTFVSLLGFMGNLLIL) form a helical membrane-spanning segment. Residues 64 to 77 (MALMRKRNQKTMVN) are Cytoplasmic-facing. Residues 78–98 (FLIGNLAFSDILVVLFCSPFT) form a helical membrane-spanning segment. Residues 99–117 (LTSVLLDQWMFGKVMCHIM) are Extracellular-facing. A disulfide bridge links Cys-114 with Cys-198. The helical transmembrane segment at 118–138 (PFLQCVSVLVSTLILISIAIV) threads the bilayer. The Cytoplasmic segment spans residues 139-156 (RYHMIKHPISNNLTANHG). A helical transmembrane segment spans residues 157–177 (YFLIATVWTLGFAICSPLPVF). Over 178–208 (HSLVELQETFDSALLSSRYLCVESWPSDSYR) the chain is Extracellular. The chain crosses the membrane as a helical span at residues 209-229 (IAFTISLLLVQYILPLVCLTV). At 230-369 (SHTSVCRSIS…KKRSRSVFYR (140 aa)) the chain is on the cytoplasmic side. The helical transmembrane segment at 370-390 (LTILILVFAVSWMPLHLFHVV) threads the bilayer. The Extracellular portion of the chain corresponds to 391 to 407 (TDFNDNLISNRHFKLVY). A helical membrane pass occupies residues 408 to 428 (CICHLLGMMSCCLNPILYGFL). The Cytoplasmic segment spans residues 429–446 (NNGIKADLISLIQCLHMS). Cys-442 carries S-palmitoyl cysteine lipidation.

Belongs to the G-protein coupled receptor 1 family.

The protein localises to the cell membrane. In terms of biological role, receptor for neuropeptide Y and peptide YY. The activity of this receptor is mediated by G proteins that inhibit adenylate cyclase activity. Seems to be associated with food intake. Could be involved in feeding disorders. The polypeptide is Neuropeptide Y receptor type 5 (NPY5R) (Canis lupus familiaris (Dog)).